We begin with the raw amino-acid sequence, 236 residues long: MNAERKFLFACLIFALVIYAIHAFGLFDLLTDLPHLQTLIRQSGFFGYSLYILLFIIATLLLLPGSILVIAGGIVFGPLLGTLLSLIAATLASSCSFLLARWLGRDLLLKYVGHSNTFQAIEKGIARNGIDFLILTRLIPLFPYNIQNYAYGLTTIAFWPYTLISALTTLPGIVIYTVMASDLANEGITLRFILQLCLAGLALFILVQLAKLYARHKHVDLSASRRSPLTHPKNEG.

5 helical membrane passes run 7–27 (FLFA…FGLF), 50–70 (LYIL…ILVI), 72–92 (GGIV…ATLA), 156–176 (IAFW…IVIY), and 192–212 (FILQ…LAKL). Residues 73–183 (GIVFGPLLGT…VIYTVMASDL (111 aa)) are VTT domain.

The protein belongs to the TVP38/TMEM64 family.

The protein resides in the cell membrane. The protein is TVP38/TMEM64 family membrane protein YdjX (ydjX) of Escherichia coli (strain K12).